The primary structure comprises 278 residues: Potassium/proton antiporter CemA (278 aa).

Transmembrane regions (helical) follow at residues 61–81 (VVFL…FLFG), 154–174 (CAIT…SILI), 203–223 (IILF…EVII), and 238–258 (FIFV…KYWI).

It belongs to the CemA family.

It localises to the plastid. The protein resides in the chloroplast inner membrane. It catalyses the reaction K(+)(in) + H(+)(out) = K(+)(out) + H(+)(in). Contributes to K(+)/H(+) antiport activity by supporting proton efflux to control proton extrusion and homeostasis in chloroplasts in a light-dependent manner to modulate photosynthesis. Prevents excessive induction of non-photochemical quenching (NPQ) under continuous-light conditions. Indirectly promotes efficient inorganic carbon uptake into chloroplasts. The polypeptide is Potassium/proton antiporter CemA (Gracilaria tenuistipitata var. liui (Red alga)).